A 396-amino-acid chain; its full sequence is Elongation factor Tu 2 (396 aa).

The 197-residue stretch at 10–206 (KPHVNVGTIG…AIDSYIPEPE (197 aa)) folds into the tr-type G domain. The G1 stretch occupies residues 19–26 (GHIDHGKT). A GTP-binding site is contributed by 19–26 (GHIDHGKT). Mg(2+) is bound at residue T26. The segment at 60–64 (GITIA) is G2. The tract at residues 81–84 (DCPG) is G3. GTP is bound by residues 81-85 (DCPGH) and 136-139 (NKCD). Residues 136–139 (NKCD) form a G4 region. Residues 174-176 (SAL) form a G5 region.

It belongs to the TRAFAC class translation factor GTPase superfamily. Classic translation factor GTPase family. EF-Tu/EF-1A subfamily. Monomer.

The protein localises to the cytoplasm. The enzyme catalyses GTP + H2O = GDP + phosphate + H(+). GTP hydrolase that promotes the GTP-dependent binding of aminoacyl-tRNA to the A-site of ribosomes during protein biosynthesis. In Desulfotalea psychrophila (strain LSv54 / DSM 12343), this protein is Elongation factor Tu 2.